The following is a 252-amino-acid chain: UPF0714 protein YndL (252 aa).

A helical membrane pass occupies residues 33-51 (IVKLLMIFMVFTPISSIYA).

Belongs to the UPF0714 family.

Its subcellular location is the cell membrane. This Bacillus subtilis (strain 168) protein is UPF0714 protein YndL (yndL).